Reading from the N-terminus, the 256-residue chain is Small ribosomal subunit protein eS1B (256 aa).

Ala-2 carries the post-translational modification N-acetylalanine; partial.

Belongs to the eukaryotic ribosomal protein eS1 family. Component of the small ribosomal subunit. Mature ribosomes consist of a small (40S) and a large (60S) subunit. The 40S subunit contains about 33 different proteins and 1 molecule of RNA (18S). The 60S subunit contains about 49 different proteins and 3 molecules of RNA (25S, 5.8S and 5S).

It localises to the cytoplasm. The protein is Small ribosomal subunit protein eS1B of Clavispora lusitaniae (strain ATCC 42720) (Yeast).